Consider the following 244-residue polypeptide: Pyridoxine 5'-phosphate synthase (244 aa).

N7 provides a ligand contact to 3-amino-2-oxopropyl phosphate. A 1-deoxy-D-xylulose 5-phosphate-binding site is contributed by 9 to 10 (DH). R18 serves as a coordination point for 3-amino-2-oxopropyl phosphate. H43 serves as the catalytic Proton acceptor. 1-deoxy-D-xylulose 5-phosphate contacts are provided by R45 and H50. E70 acts as the Proton acceptor in catalysis. T100 contributes to the 1-deoxy-D-xylulose 5-phosphate binding site. Catalysis depends on H191, which acts as the Proton donor. 3-amino-2-oxopropyl phosphate-binding positions include G192 and 213-214 (GH).

The protein belongs to the PNP synthase family. In terms of assembly, homooctamer; tetramer of dimers.

Its subcellular location is the cytoplasm. The enzyme catalyses 3-amino-2-oxopropyl phosphate + 1-deoxy-D-xylulose 5-phosphate = pyridoxine 5'-phosphate + phosphate + 2 H2O + H(+). The protein operates within cofactor biosynthesis; pyridoxine 5'-phosphate biosynthesis; pyridoxine 5'-phosphate from D-erythrose 4-phosphate: step 5/5. In terms of biological role, catalyzes the complicated ring closure reaction between the two acyclic compounds 1-deoxy-D-xylulose-5-phosphate (DXP) and 3-amino-2-oxopropyl phosphate (1-amino-acetone-3-phosphate or AAP) to form pyridoxine 5'-phosphate (PNP) and inorganic phosphate. The polypeptide is Pyridoxine 5'-phosphate synthase (Laribacter hongkongensis (strain HLHK9)).